Reading from the N-terminus, the 366-residue chain is Chorismate synthase (366 aa).

Arg48 lines the NADP(+) pocket. Residues 125–127, Gly283, 298–302, and Arg324 contribute to the FMN site; these read RSS and KPTPS.

Belongs to the chorismate synthase family. Homotetramer. Requires FMNH2 as cofactor.

It carries out the reaction 5-O-(1-carboxyvinyl)-3-phosphoshikimate = chorismate + phosphate. It participates in metabolic intermediate biosynthesis; chorismate biosynthesis; chorismate from D-erythrose 4-phosphate and phosphoenolpyruvate: step 7/7. Catalyzes the anti-1,4-elimination of the C-3 phosphate and the C-6 proR hydrogen from 5-enolpyruvylshikimate-3-phosphate (EPSP) to yield chorismate, which is the branch point compound that serves as the starting substrate for the three terminal pathways of aromatic amino acid biosynthesis. This reaction introduces a second double bond into the aromatic ring system. The chain is Chorismate synthase from Lachnospira eligens (strain ATCC 27750 / DSM 3376 / VPI C15-48 / C15-B4) (Eubacterium eligens).